The chain runs to 195 residues: Putative inactive carbonic anhydrase 5B-like protein (195 aa).

A substrate-binding site is contributed by 121 to 122; it reads TT.

Belongs to the alpha-carbonic anhydrase family.

The sequence is that of Putative inactive carbonic anhydrase 5B-like protein (CA5BP1) from Homo sapiens (Human).